A 390-amino-acid chain; its full sequence is Dihydroorotase (390 aa).

Residues His-54 and His-56 each coordinate Zn(2+). Substrate-binding positions include 56-58 and Asn-88; that span reads HIR. Positions 136, 160, 197, and 259 each coordinate Zn(2+). Residue Lys-136 is modified to N6-carboxylysine. Asp-259 is an active-site residue. Substrate is bound by residues His-263 and 277 to 278; that span reads PG.

Belongs to the metallo-dependent hydrolases superfamily. DHOase family. Class I DHOase subfamily. Zn(2+) is required as a cofactor.

The enzyme catalyses (S)-dihydroorotate + H2O = N-carbamoyl-L-aspartate + H(+). It participates in pyrimidine metabolism; UMP biosynthesis via de novo pathway; (S)-dihydroorotate from bicarbonate: step 3/3. Functionally, catalyzes the reversible cyclization of carbamoyl aspartate to dihydroorotate. This is Dihydroorotase from Saccharolobus solfataricus (strain ATCC 35092 / DSM 1617 / JCM 11322 / P2) (Sulfolobus solfataricus).